A 340-amino-acid chain; its full sequence is MKKILLLIPLAFAASLAWFVWLEPSPAPETAPPASPQAGADRAPPAASAGEAVPAPQVMPAKVAPLPTSFRGTSVDGSFSVDASGNLLITRDIRNLFDYFLSAVGEEPLQQSLDRLRAYIAAELQEPARGQALALMQQYIDYKKELVLLERDLPRLADLDALRQREAAVKALRARIFSNEAHVAFFADEETYNQFTLERLAIRQDGKLSAEEKAAAIDRLRASLPEDQQESVLPQLQSELQQQTAALQAAGAGPEAIRQMRQQLVGAEATTRLEQLDRQRSAWKGRLDDYFAEKSRIEGNTGLSEADRRAAVERLAEERFSEQERLRLGALEQMRQAEQR.

The chain crosses the membrane as a helical span at residues 4-24 (ILLLIPLAFAASLAWFVWLEP). The disordered stretch occupies residues 29–51 (ETAPPASPQAGADRAPPAASAGE). Over residues 36–51 (PQAGADRAPPAASAGE) the composition is skewed to low complexity.

It belongs to the lipase chaperone family.

It is found in the cell inner membrane. Its function is as follows. May be involved in the folding of the extracellular lipase during its passage through the periplasm. This Pseudomonas aeruginosa (strain ATCC 15692 / DSM 22644 / CIP 104116 / JCM 14847 / LMG 12228 / 1C / PRS 101 / PAO1) protein is Lipase chaperone (lifO).